Here is a 232-residue protein sequence, read N- to C-terminus: Peptidyl-prolyl cis-trans isomerase FKBP18, chloroplastic (232 aa).

One can recognise a PPIase FKBP-type domain in the interval 108–226 (GSTAQVHFDC…ELNIELLRVT (119 aa)).

The protein belongs to the FKBP-type PPIase family.

It is found in the plastid. The protein resides in the chloroplast thylakoid lumen. It carries out the reaction [protein]-peptidylproline (omega=180) = [protein]-peptidylproline (omega=0). In terms of biological role, PPIases accelerate the folding of proteins. It catalyzes the cis-trans isomerization of proline imidic peptide bonds in oligopeptides. In Arabidopsis thaliana (Mouse-ear cress), this protein is Peptidyl-prolyl cis-trans isomerase FKBP18, chloroplastic (FKBP18).